The primary structure comprises 258 residues: Imidazole glycerol phosphate synthase subunit HisF (258 aa).

Active-site residues include Asp11 and Asp130.

The protein belongs to the HisA/HisF family. As to quaternary structure, heterodimer of HisH and HisF.

The protein localises to the cytoplasm. The enzyme catalyses 5-[(5-phospho-1-deoxy-D-ribulos-1-ylimino)methylamino]-1-(5-phospho-beta-D-ribosyl)imidazole-4-carboxamide + L-glutamine = D-erythro-1-(imidazol-4-yl)glycerol 3-phosphate + 5-amino-1-(5-phospho-beta-D-ribosyl)imidazole-4-carboxamide + L-glutamate + H(+). Its pathway is amino-acid biosynthesis; L-histidine biosynthesis; L-histidine from 5-phospho-alpha-D-ribose 1-diphosphate: step 5/9. Its function is as follows. IGPS catalyzes the conversion of PRFAR and glutamine to IGP, AICAR and glutamate. The HisF subunit catalyzes the cyclization activity that produces IGP and AICAR from PRFAR using the ammonia provided by the HisH subunit. The polypeptide is Imidazole glycerol phosphate synthase subunit HisF (Shigella dysenteriae serotype 1 (strain Sd197)).